The sequence spans 636 residues: Signal recognition particle receptor subunit alpha (636 aa).

Disordered regions lie at residues Ala-132–Lys-205, Ile-217–Val-246, and Ile-280–Thr-314. Composition is skewed to basic and acidic residues over residues Lys-137–Lys-146 and Ile-153–Lys-165. Ser-177 is modified (phosphoserine). Basic and acidic residues predominate over residues Ile-217 to Glu-238. Thr-283 is modified (phosphothreonine). Phosphoserine is present on residues Ser-295, Ser-296, and Ser-297. Residues Ala-302–Lys-312 are compositionally biased toward polar residues. A Phosphothreonine modification is found at Thr-303. The interval Tyr-417–Met-634 is NG domain. Residues Gly-423 to Ser-430 and Asp-518 to Arg-522 contribute to the GTP site. Position 576 is a phosphothreonine (Thr-576). Thr-586–Asp-589 lines the GTP pocket.

It belongs to the GTP-binding SRP family. In terms of assembly, heterodimer with SRPRB. Interacts with the signal recognition particle (SRP) complex subunit SRP54.

The protein localises to the endoplasmic reticulum membrane. Its function is as follows. Component of the SRP (signal recognition particle) receptor. Ensures, in conjunction with the signal recognition particle, the correct targeting of the nascent secretory proteins to the endoplasmic reticulum membrane system. Forms a guanosine 5'-triphosphate (GTP)-dependent complex with the SRP subunit SRP54. SRP receptor compaction and GTPase rearrangement drive SRP-mediated cotranslational protein translocation into the ER. The protein is Signal recognition particle receptor subunit alpha of Mus musculus (Mouse).